Consider the following 87-residue polypeptide: Small ribosomal subunit protein uS15c (87 aa).

The protein belongs to the universal ribosomal protein uS15 family. In terms of assembly, part of the 30S ribosomal subunit.

Its subcellular location is the plastid. It localises to the chloroplast. The sequence is that of Small ribosomal subunit protein uS15c (rps15) from Nicotiana tabacum (Common tobacco).